Reading from the N-terminus, the 228-residue chain is Ribose-5-phosphate isomerase A (228 aa).

Substrate is bound by residues 29–32 (TGST), 85–88 (DGAD), and 98–101 (KGGG). The active-site Proton acceptor is the glutamate 107. Lysine 125 lines the substrate pocket.

This sequence belongs to the ribose 5-phosphate isomerase family. In terms of assembly, homodimer.

The catalysed reaction is aldehydo-D-ribose 5-phosphate = D-ribulose 5-phosphate. The protein operates within carbohydrate degradation; pentose phosphate pathway; D-ribose 5-phosphate from D-ribulose 5-phosphate (non-oxidative stage): step 1/1. Catalyzes the reversible conversion of ribose-5-phosphate to ribulose 5-phosphate. This is Ribose-5-phosphate isomerase A from Staphylococcus aureus (strain Mu50 / ATCC 700699).